The primary structure comprises 412 residues: Light-independent protochlorophyllide reductase subunit N (412 aa).

[4Fe-4S] cluster contacts are provided by Cys17, Cys42, and Cys103.

Belongs to the BchN/ChlN family. As to quaternary structure, protochlorophyllide reductase is composed of three subunits; ChlL, ChlN and ChlB. Forms a heterotetramer of two ChlB and two ChlN subunits. Requires [4Fe-4S] cluster as cofactor.

The enzyme catalyses chlorophyllide a + oxidized 2[4Fe-4S]-[ferredoxin] + 2 ADP + 2 phosphate = protochlorophyllide a + reduced 2[4Fe-4S]-[ferredoxin] + 2 ATP + 2 H2O. Its pathway is porphyrin-containing compound metabolism; chlorophyll biosynthesis (light-independent). Functionally, component of the dark-operative protochlorophyllide reductase (DPOR) that uses Mg-ATP and reduced ferredoxin to reduce ring D of protochlorophyllide (Pchlide) to form chlorophyllide a (Chlide). This reaction is light-independent. The NB-protein (ChlN-ChlB) is the catalytic component of the complex. This Synechococcus sp. (strain CC9902) protein is Light-independent protochlorophyllide reductase subunit N.